A 397-amino-acid polypeptide reads, in one-letter code: Tryptophan synthase beta chain (397 aa).

At K91 the chain carries N6-(pyridoxal phosphate)lysine.

This sequence belongs to the TrpB family. As to quaternary structure, tetramer of two alpha and two beta chains. Pyridoxal 5'-phosphate serves as cofactor.

The catalysed reaction is (1S,2R)-1-C-(indol-3-yl)glycerol 3-phosphate + L-serine = D-glyceraldehyde 3-phosphate + L-tryptophan + H2O. It functions in the pathway amino-acid biosynthesis; L-tryptophan biosynthesis; L-tryptophan from chorismate: step 5/5. Functionally, the beta subunit is responsible for the synthesis of L-tryptophan from indole and L-serine. The polypeptide is Tryptophan synthase beta chain (Bacillus cereus (strain AH187)).